A 517-amino-acid chain; its full sequence is GMP synthase [glutamine-hydrolyzing] (517 aa).

The Glutamine amidotransferase type-1 domain occupies 9–199 (RILILDFGSQ…VLGVCGCERL (191 aa)). Catalysis depends on C86, which acts as the Nucleophile. Residues H173 and E175 contribute to the active site. One can recognise a GMPS ATP-PPase domain in the interval 200 to 392 (WTSESIIEDA…LGLPYEMLYR (193 aa)). 227–233 (SGGVDSS) contacts ATP.

In terms of assembly, homodimer.

It carries out the reaction XMP + L-glutamine + ATP + H2O = GMP + L-glutamate + AMP + diphosphate + 2 H(+). The protein operates within purine metabolism; GMP biosynthesis; GMP from XMP (L-Gln route): step 1/1. In terms of biological role, catalyzes the synthesis of GMP from XMP. This Vibrio vulnificus (strain YJ016) protein is GMP synthase [glutamine-hydrolyzing].